The sequence spans 287 residues: Cell wall protein PIR5 (287 aa).

A signal peptide spans 1–21; that stretch reads MHYKKAFLASLLSSIALTAYA. Positions 22–62 are excised as a propeptide; that stretch reads PPEPWATLTPSSKMDGGTTEYRTSFGLAVIPFTVTESKVKR. 4 PIR1/2/3 repeats span residues 62–80, 81–99, 104–122, and 144–162; these read RNVI…TQKL, PHPV…TQKV, SHIV…TAKN, and ATAV…ISSA.

This sequence belongs to the PIR protein family. Covalently linked to beta-1,3-glucan of the inner cell wall layer via an alkali-sensitive ester linkage between the gamma-carboxyl group of glutamic acids, arising from specific glutamines within the PIR1/2/3 repeats, and hydroxyl groups of glucoses of beta-1,3-glucan chains.

The protein resides in the secreted. The protein localises to the cell wall. Functionally, component of the outer cell wall layer. May be involved in meiosis and sporulation. The chain is Cell wall protein PIR5 (PIR5) from Saccharomyces cerevisiae (strain RM11-1a) (Baker's yeast).